Consider the following 502-residue polypeptide: Probable cytosol aminopeptidase (502 aa).

Residues Lys269 and Asp274 each coordinate Mn(2+). The active site involves Lys281. The Mn(2+) site is built by Asp292, Asp351, and Glu353. Arg355 is an active-site residue.

Belongs to the peptidase M17 family. It depends on Mn(2+) as a cofactor.

Its subcellular location is the cytoplasm. The catalysed reaction is Release of an N-terminal amino acid, Xaa-|-Yaa-, in which Xaa is preferably Leu, but may be other amino acids including Pro although not Arg or Lys, and Yaa may be Pro. Amino acid amides and methyl esters are also readily hydrolyzed, but rates on arylamides are exceedingly low.. It carries out the reaction Release of an N-terminal amino acid, preferentially leucine, but not glutamic or aspartic acids.. In terms of biological role, presumably involved in the processing and regular turnover of intracellular proteins. Catalyzes the removal of unsubstituted N-terminal amino acids from various peptides. This is Probable cytosol aminopeptidase from Shewanella loihica (strain ATCC BAA-1088 / PV-4).